Reading from the N-terminus, the 284-residue chain is Tropomyosin (284 aa).

A coiled-coil region spans residues 1-284; the sequence is MDGIKKKMIA…DQTFAELTGY (284 aa). Residues 111-131 form a disordered region; that stretch reads TKLEEASKTAEESERGRKDLE.

This sequence belongs to the tropomyosin family. Homodimer.

Functionally, tropomyosin, in association with the troponin complex, plays a central role in the calcium dependent regulation of muscle contraction. The polypeptide is Tropomyosin (Schistosoma japonicum (Blood fluke)).